Reading from the N-terminus, the 25-residue chain is Small ribosomal subunit protein eS32 (25 aa).

A disordered region spans residues 1-25 (MRAKWRKKRVRRLKRKRRKVRARSK).

It belongs to the eukaryotic ribosomal protein eS32 family. In terms of assembly, component of the small ribosomal subunit.

This chain is Small ribosomal subunit protein eS32 (RPL41), found in Eremothecium gossypii (strain ATCC 10895 / CBS 109.51 / FGSC 9923 / NRRL Y-1056) (Yeast).